Consider the following 634-residue polypeptide: Glutamate--tRNA ligase (634 aa).

Residues 108-118 (PNPSGPLHIGH) carry the 'HIGH' region motif.

This sequence belongs to the class-I aminoacyl-tRNA synthetase family. Glutamate--tRNA ligase type 2 subfamily.

It is found in the cytoplasm. It carries out the reaction tRNA(Glu) + L-glutamate + ATP = L-glutamyl-tRNA(Glu) + AMP + diphosphate. Its function is as follows. Catalyzes the attachment of glutamate to tRNA(Glu) in a two-step reaction: glutamate is first activated by ATP to form Glu-AMP and then transferred to the acceptor end of tRNA(Glu). This chain is Glutamate--tRNA ligase, found in Methanoregula boonei (strain DSM 21154 / JCM 14090 / 6A8).